A 314-amino-acid polypeptide reads, in one-letter code: NADH-ubiquinone oxidoreductase chain 2 (314 aa).

The next 9 membrane-spanning stretches (helical) occupy residues 13 to 35 (LGVMLIGTILSVSSEELVGVWLG), 61 to 80 (YFVVQSTGSILMLVGFVSLM), 85 to 107 (VSGLVMSTAXTVLKSGVFPLHSW), 117 to 139 (WLASGLMLTWQKVAPLVFLSMIL), 144 to 166 (LWVVIVSMAGIGAVGGLNQNSVR), 189 to 209 (VVFVGYFAVYSLSVGLFFYGC), 224 to 244 (AASGMGLLMLMGMPPFLGFLA), 246 to 266 (VLVFLMSGSPVIVACIMGSVI), and 294 to 314 (IWSLVICMNIMGGALILVSFI).

The protein belongs to the complex I subunit 2 family.

Its subcellular location is the mitochondrion inner membrane. It catalyses the reaction a ubiquinone + NADH + 5 H(+)(in) = a ubiquinol + NAD(+) + 4 H(+)(out). Its function is as follows. Core subunit of the mitochondrial membrane respiratory chain NADH dehydrogenase (Complex I) that is believed to belong to the minimal assembly required for catalysis. Complex I functions in the transfer of electrons from NADH to the respiratory chain. The immediate electron acceptor for the enzyme is believed to be ubiquinone. The protein is NADH-ubiquinone oxidoreductase chain 2 (ND2) of Mytilus edulis (Blue mussel).